A 211-amino-acid polypeptide reads, in one-letter code: Protein GrpE (211 aa).

Over residues 1–10 the composition is skewed to basic and acidic residues; it reads MTDDTKKPGP. 2 disordered regions span residues 1-37 and 187-211; these read MTDD…PDPV and AKGG…EKDA. The segment covering 27 to 36 has biased composition (acidic residues); it reads EQAETAEPDP. Polar residues predominate over residues 201-211; that stretch reads PGTSSLNEKDA.

Belongs to the GrpE family. As to quaternary structure, homodimer.

Its subcellular location is the cytoplasm. In terms of biological role, participates actively in the response to hyperosmotic and heat shock by preventing the aggregation of stress-denatured proteins, in association with DnaK and GrpE. It is the nucleotide exchange factor for DnaK and may function as a thermosensor. Unfolded proteins bind initially to DnaJ; upon interaction with the DnaJ-bound protein, DnaK hydrolyzes its bound ATP, resulting in the formation of a stable complex. GrpE releases ADP from DnaK; ATP binding to DnaK triggers the release of the substrate protein, thus completing the reaction cycle. Several rounds of ATP-dependent interactions between DnaJ, DnaK and GrpE are required for fully efficient folding. This is Protein GrpE from Agrobacterium fabrum (strain C58 / ATCC 33970) (Agrobacterium tumefaciens (strain C58)).